Here is a 402-residue protein sequence, read N- to C-terminus: Imidazolonepropionase (402 aa).

Residues histidine 66 and histidine 68 each contribute to the Fe(3+) site. Histidine 66 and histidine 68 together coordinate Zn(2+). The 4-imidazolone-5-propanoate site is built by arginine 75, tyrosine 138, and histidine 171. Tyrosine 138 contacts N-formimidoyl-L-glutamate. Histidine 236 is a Fe(3+) binding site. Histidine 236 is a Zn(2+) binding site. Position 239 (glutamine 239) interacts with 4-imidazolone-5-propanoate. A Fe(3+)-binding site is contributed by aspartate 311. Aspartate 311 contributes to the Zn(2+) binding site. Residues asparagine 313 and glycine 315 each contribute to the N-formimidoyl-L-glutamate site. Threonine 316 provides a ligand contact to 4-imidazolone-5-propanoate.

This sequence belongs to the metallo-dependent hydrolases superfamily. HutI family. It depends on Zn(2+) as a cofactor. Requires Fe(3+) as cofactor.

It is found in the cytoplasm. The catalysed reaction is 4-imidazolone-5-propanoate + H2O = N-formimidoyl-L-glutamate. It participates in amino-acid degradation; L-histidine degradation into L-glutamate; N-formimidoyl-L-glutamate from L-histidine: step 3/3. In terms of biological role, catalyzes the hydrolytic cleavage of the carbon-nitrogen bond in imidazolone-5-propanoate to yield N-formimidoyl-L-glutamate. It is the third step in the universal histidine degradation pathway. This Pseudomonas paraeruginosa (strain DSM 24068 / PA7) (Pseudomonas aeruginosa (strain PA7)) protein is Imidazolonepropionase.